A 490-amino-acid chain; its full sequence is Betaine aldehyde dehydrogenase (490 aa).

Residues S26, I27, and D93 each coordinate K(+). NAD(+) is bound at residue 150-152; the sequence is GAW. The active-site Charge relay system is the K162. 176 to 179 serves as a coordination point for NAD(+); it reads KPSE. V180 contributes to the K(+) binding site. 230–233 provides a ligand contact to NAD(+); that stretch reads GTVT. Residue L246 coordinates K(+). Catalysis depends on E252, which acts as the Proton acceptor. Positions 254, 286, and 387 each coordinate NAD(+). Residue C286 is the Nucleophile of the active site. C286 bears the Cysteine sulfenic acid (-SOH) mark. 2 residues coordinate K(+): K457 and G460. Residue E464 is the Charge relay system of the active site.

It belongs to the aldehyde dehydrogenase family. Dimer of dimers. K(+) serves as cofactor.

The catalysed reaction is betaine aldehyde + NAD(+) + H2O = glycine betaine + NADH + 2 H(+). Its pathway is amine and polyamine biosynthesis; betaine biosynthesis via choline pathway; betaine from betaine aldehyde: step 1/1. Functionally, involved in the biosynthesis of the osmoprotectant glycine betaine. Catalyzes the irreversible oxidation of betaine aldehyde to the corresponding acid. This Ectopseudomonas mendocina (strain ymp) (Pseudomonas mendocina) protein is Betaine aldehyde dehydrogenase.